We begin with the raw amino-acid sequence, 349 residues long: ATP phosphoribosyltransferase regulatory subunit (349 aa).

The interval 327-349 (GRGRGVRPRRASARGGRARARPR) is disordered. The segment covering 330-349 (RGVRPRRASARGGRARARPR) has biased composition (basic residues).

This sequence belongs to the class-II aminoacyl-tRNA synthetase family. HisZ subfamily. In terms of assembly, heteromultimer composed of HisG and HisZ subunits.

The protein resides in the cytoplasm. It functions in the pathway amino-acid biosynthesis; L-histidine biosynthesis; L-histidine from 5-phospho-alpha-D-ribose 1-diphosphate: step 1/9. Required for the first step of histidine biosynthesis. May allow the feedback regulation of ATP phosphoribosyltransferase activity by histidine. In Anaeromyxobacter dehalogenans (strain 2CP-1 / ATCC BAA-258), this protein is ATP phosphoribosyltransferase regulatory subunit.